Consider the following 262-residue polypeptide: Small ribosomal subunit protein eS4y (262 aa).

Residues 42–104 (LPLVLIIRNR…TNENFRLLYD (63 aa)) form the S4 RNA-binding domain.

The protein belongs to the eukaryotic ribosomal protein eS4 family.

The protein resides in the cytoplasm. In Arabidopsis thaliana (Mouse-ear cress), this protein is Small ribosomal subunit protein eS4y (RPS4B).